The primary structure comprises 460 residues: Bifunctional protein GlmU (460 aa).

The tract at residues 1–229 (MTNYAIILAA…FNESLGVNDR (229 aa)) is pyrophosphorylase. UDP-N-acetyl-alpha-D-glucosamine-binding positions include 8-11 (LAAG), K22, Q72, and 77-78 (GT). D102 provides a ligand contact to Mg(2+). UDP-N-acetyl-alpha-D-glucosamine is bound by residues G139, E154, N169, and N227. N227 serves as a coordination point for Mg(2+). Residues 230–250 (VALATAETVMRQRITQKHMVN) form a linker region. The tract at residues 251–460 (GVTFQNPETV…RLAHHPSRSK (210 aa)) is N-acetyltransferase. 2 residues coordinate UDP-N-acetyl-alpha-D-glucosamine: R332 and K350. H362 functions as the Proton acceptor in the catalytic mechanism. Residues Y365 and N376 each coordinate UDP-N-acetyl-alpha-D-glucosamine. Acetyl-CoA is bound by residues A379, 385-386 (NY), S404, A422, and R439.

In the N-terminal section; belongs to the N-acetylglucosamine-1-phosphate uridyltransferase family. The protein in the C-terminal section; belongs to the transferase hexapeptide repeat family. As to quaternary structure, homotrimer. The cofactor is Mg(2+).

The protein resides in the cytoplasm. The catalysed reaction is alpha-D-glucosamine 1-phosphate + acetyl-CoA = N-acetyl-alpha-D-glucosamine 1-phosphate + CoA + H(+). It catalyses the reaction N-acetyl-alpha-D-glucosamine 1-phosphate + UTP + H(+) = UDP-N-acetyl-alpha-D-glucosamine + diphosphate. The protein operates within nucleotide-sugar biosynthesis; UDP-N-acetyl-alpha-D-glucosamine biosynthesis; N-acetyl-alpha-D-glucosamine 1-phosphate from alpha-D-glucosamine 6-phosphate (route II): step 2/2. It participates in nucleotide-sugar biosynthesis; UDP-N-acetyl-alpha-D-glucosamine biosynthesis; UDP-N-acetyl-alpha-D-glucosamine from N-acetyl-alpha-D-glucosamine 1-phosphate: step 1/1. Its pathway is bacterial outer membrane biogenesis; LPS lipid A biosynthesis. Catalyzes the last two sequential reactions in the de novo biosynthetic pathway for UDP-N-acetylglucosamine (UDP-GlcNAc). The C-terminal domain catalyzes the transfer of acetyl group from acetyl coenzyme A to glucosamine-1-phosphate (GlcN-1-P) to produce N-acetylglucosamine-1-phosphate (GlcNAc-1-P), which is converted into UDP-GlcNAc by the transfer of uridine 5-monophosphate (from uridine 5-triphosphate), a reaction catalyzed by the N-terminal domain. The sequence is that of Bifunctional protein GlmU from Streptococcus pyogenes serotype M12 (strain MGAS9429).